Consider the following 102-residue polypeptide: Protein CASC2, isoform 3 (102 aa).

As to expression, expressed in normal and neoplastic endometrial tissues.

Its function is as follows. May act as a potential tumor suppressor. The chain is Protein CASC2, isoform 3 (CASC2) from Homo sapiens (Human).